A 263-amino-acid chain; its full sequence is Shikimate dehydrogenase (NADP(+)) (263 aa).

Residues 14–16 (SLS) and Thr-60 contribute to the shikimate site. The active-site Proton acceptor is Lys-64. The shikimate site is built by Asn-85 and Asp-100. NADP(+) contacts are provided by residues 123-127 (GAGGA), 146-151 (NRTPQR), and Leu-205. Tyr-207 is a shikimate binding site. Residue Gly-228 participates in NADP(+) binding. Gln-235 is a shikimate binding site.

Belongs to the shikimate dehydrogenase family. In terms of assembly, homodimer.

The enzyme catalyses shikimate + NADP(+) = 3-dehydroshikimate + NADPH + H(+). The protein operates within metabolic intermediate biosynthesis; chorismate biosynthesis; chorismate from D-erythrose 4-phosphate and phosphoenolpyruvate: step 4/7. Involved in the biosynthesis of the chorismate, which leads to the biosynthesis of aromatic amino acids. Catalyzes the reversible NADPH linked reduction of 3-dehydroshikimate (DHSA) to yield shikimate (SA). This Thermus thermophilus (strain ATCC 27634 / DSM 579 / HB8) protein is Shikimate dehydrogenase (NADP(+)).